Consider the following 150-residue polypeptide: SsrA-binding protein (150 aa).

This sequence belongs to the SmpB family.

It is found in the cytoplasm. Functionally, required for rescue of stalled ribosomes mediated by trans-translation. Binds to transfer-messenger RNA (tmRNA), required for stable association of tmRNA with ribosomes. tmRNA and SmpB together mimic tRNA shape, replacing the anticodon stem-loop with SmpB. tmRNA is encoded by the ssrA gene; the 2 termini fold to resemble tRNA(Ala) and it encodes a 'tag peptide', a short internal open reading frame. During trans-translation Ala-aminoacylated tmRNA acts like a tRNA, entering the A-site of stalled ribosomes, displacing the stalled mRNA. The ribosome then switches to translate the ORF on the tmRNA; the nascent peptide is terminated with the 'tag peptide' encoded by the tmRNA and targeted for degradation. The ribosome is freed to recommence translation, which seems to be the essential function of trans-translation. In Nitratiruptor sp. (strain SB155-2), this protein is SsrA-binding protein.